The sequence spans 190 residues: Imidazoleglycerol-phosphate dehydratase (190 aa).

This sequence belongs to the imidazoleglycerol-phosphate dehydratase family.

The protein localises to the cytoplasm. The enzyme catalyses D-erythro-1-(imidazol-4-yl)glycerol 3-phosphate = 3-(imidazol-4-yl)-2-oxopropyl phosphate + H2O. It participates in amino-acid biosynthesis; L-histidine biosynthesis; L-histidine from 5-phospho-alpha-D-ribose 1-diphosphate: step 6/9. The chain is Imidazoleglycerol-phosphate dehydratase from Nitratiruptor sp. (strain SB155-2).